The primary structure comprises 158 residues: Cyclic pyranopterin monophosphate synthase (158 aa).

Substrate is bound by residues Leu-75–His-77 and Met-113–Glu-114. Asp-128 is a catalytic residue.

This sequence belongs to the MoaC family. In terms of assembly, homohexamer; trimer of dimers.

It carries out the reaction (8S)-3',8-cyclo-7,8-dihydroguanosine 5'-triphosphate = cyclic pyranopterin phosphate + diphosphate. The protein operates within cofactor biosynthesis; molybdopterin biosynthesis. In terms of biological role, catalyzes the conversion of (8S)-3',8-cyclo-7,8-dihydroguanosine 5'-triphosphate to cyclic pyranopterin monophosphate (cPMP). The chain is Cyclic pyranopterin monophosphate synthase from Actinobacillus succinogenes (strain ATCC 55618 / DSM 22257 / CCUG 43843 / 130Z).